A 340-amino-acid chain; its full sequence is GTP 3',8-cyclase (340 aa).

The region spanning 8-227 (KLGRPIRDLR…TMIEQHFEID (220 aa)) is the Radical SAM core domain. GTP is bound at residue R17. Residues C24 and C28 each coordinate [4Fe-4S] cluster. Y30 is a binding site for S-adenosyl-L-methionine. Residue C31 coordinates [4Fe-4S] cluster. Residue R71 participates in GTP binding. G75 is an S-adenosyl-L-methionine binding site. T102 is a GTP binding site. An S-adenosyl-L-methionine-binding site is contributed by S126. Position 163 (K163) interacts with GTP. Residue M197 coordinates S-adenosyl-L-methionine. C261 and C264 together coordinate [4Fe-4S] cluster. 266–268 (RAR) provides a ligand contact to GTP. A [4Fe-4S] cluster-binding site is contributed by C278.

It belongs to the radical SAM superfamily. MoaA family. As to quaternary structure, monomer and homodimer. The cofactor is [4Fe-4S] cluster.

It carries out the reaction GTP + AH2 + S-adenosyl-L-methionine = (8S)-3',8-cyclo-7,8-dihydroguanosine 5'-triphosphate + 5'-deoxyadenosine + L-methionine + A + H(+). It functions in the pathway cofactor biosynthesis; molybdopterin biosynthesis. Catalyzes the cyclization of GTP to (8S)-3',8-cyclo-7,8-dihydroguanosine 5'-triphosphate. This Staphylococcus aureus (strain MRSA252) protein is GTP 3',8-cyclase.